The primary structure comprises 464 residues: Argininosuccinate lyase (464 aa).

It belongs to the lyase 1 family. Argininosuccinate lyase subfamily.

The protein localises to the cytoplasm. The enzyme catalyses 2-(N(omega)-L-arginino)succinate = fumarate + L-arginine. It participates in amino-acid biosynthesis; L-arginine biosynthesis; L-arginine from L-ornithine and carbamoyl phosphate: step 3/3. The protein is Argininosuccinate lyase of Pseudomonas syringae pv. syringae (strain B728a).